We begin with the raw amino-acid sequence, 581 residues long: Activating signal cointegrator 1 (581 aa).

The residue at position 2 (alanine 2) is an N-acetylalanine. Residues 97 to 118 are disordered; it reads KSGDHLKRGRKKGRNRQEVPAF. The segment at 171 to 187 adopts a C4-type zinc-finger fold; that stretch reads CDCLGQKHKLINNCLIC. The interval 200–300 is mediates interaction with DDRGK1; sequence CLFCGTLVCT…ASDSNQWLSK (101 aa). A Phosphoserine modification is found at serine 276. Position 289 is a phosphotyrosine (tyrosine 289). The tract at residues 300-400 is mediates interaction with UFL1; that stretch reads KLERETLQKR…WVDHTGAASQ (101 aa). Residues lysine 324, lysine 325, and lysine 334 each participate in a glycyl lysine isopeptide (Lys-Gly) (interchain with G-Cter in UFM1) cross-link. Residue serine 341 is modified to Phosphoserine. A Glycyl lysine isopeptide (Lys-Gly) (interchain with G-Cter in UFM1) cross-link involves residue lysine 367. The region spanning 437–531 is the ASCH domain; that stretch reads LSVHQPWASL…FKEQFPDISQ (95 aa).

Interacts with the thyroid hormone receptor/TR (via the ligand-binding domain); this interaction requires the presence of thyroid hormone. Interacts with the androgen receptor/AR; in an androgen, testosterone and dihydrotestosterone-dependent manner. Interacts with ESR1 (estrogen ligand-bound); competes with UFSP2. Interacts with UFSP2; competes with ligand-bound ESR1. Interacts with DDRGK1 and UFL1; the interaction with DDRGK1 is direct. Interacts with NCOA1. Interacts with EP300. Part of the ASC-1 complex, that contains TRIP4, ASCC1, ASCC2 and ASCC3. Identified in the RQT (ribosome quality control trigger) complex, that contains ASCC2, ASCC3 and TRIP4. Interacts with NEK6. Interacts with CSRP1. Interacts with ZCCHC4. Post-translationally, phosphorylated by NEK6. Polyufmylated by the UFM1-conjugating system composed of the enzymes UBA5, UFC1 and UFL1. Deufmylated by the protease UFSP2. Ufmylation of TRIP4 is promoted by ligand-bound nuclear receptors that compete with UFSP2 for interaction with TRIP4. Nuclear receptors-induced ufmylation promotes the recruitment of additional transcriptional coactivators like EP300 and NCOA1 and therefore the assembly of a coactivator complex facilitating nuclear receptor-mediated transcription.

The protein resides in the nucleus. Its subcellular location is the cytoplasm. It is found in the cytosol. The protein localises to the cytoskeleton. It localises to the microtubule organizing center. The protein resides in the centrosome. Its function is as follows. Transcription coactivator which associates with nuclear receptors, transcriptional coactivators including EP300, CREBBP and NCOA1, and basal transcription factors like TBP and TFIIA to facilitate nuclear receptors-mediated transcription. May thereby play an important role in establishing distinct coactivator complexes under different cellular conditions. Plays a role in thyroid hormone receptor and estrogen receptor transactivation. Also involved in androgen receptor transactivation. Plays a pivotal role in the transactivation of NF-kappa-B, SRF and AP1. Acts as a mediator of transrepression between nuclear receptor and either AP1 or NF-kappa-B. May play a role in the development of neuromuscular junction. May play a role in late myogenic differentiation. Also functions as part of the RQC trigger (RQT) complex that activates the ribosome quality control (RQC) pathway, a pathway that degrades nascent peptide chains during problematic translation. This is Activating signal cointegrator 1 from Homo sapiens (Human).